Here is a 330-residue protein sequence, read N- to C-terminus: Short chain dehydrogenase macD (330 aa).

Lys-57, Asp-86, Asn-113, Tyr-204, and Lys-208 together coordinate NADP(+). Tyr-204 serves as the catalytic Proton donor. Lys-208 serves as the catalytic Lowers pKa of active site Tyr.

This sequence belongs to the short-chain dehydrogenases/reductases (SDR) family.

It participates in secondary metabolite biosynthesis; terpenoid biosynthesis. Its function is as follows. Short chain dehydrogenase; part of the gene cluster that mediates the biosynthesis of macrophorins, isoprenoid epoxycyclohexenones containing cyclized drimane moieties. The first step of the pathway is the synthesis of 6-methylsalicylic acid (6-MSA) by the polyketide synthase macA. 6-MSA is then converted to m-cresol by the decarboxylase macB. The cytochrome P450 monooxygenase macC then catalyzes the oxidation of m-cresol to toluquinol. Epoxidation of toluquinol is then performed by the short chain dehydrogenase macD, with the help of macE, and a further prenylation by macG leads to 7-deacetoxyyanuthone A. The next step is the hydroxylation of C-22 of 7-deacetoxyyanuthone A by the cytochrome P450 monooxygenase macH to yield 22-deacetylyanuthone A. O-Mevalon transferase macI then attaches mevalon to the hydroxyl group of 22-deacetylyanuthone A to produce yanuthone E. The terpene cyclase macJ catalyzes the cyclization of 22-deacetylyanuthone A to macrophorin A. MacJ is also able to catalyze cyclization of yanuthone E and 7-deacetoxyyanuthone A to their corresponding macrophorins. The macJ products can be further modified by macH and macJ, as well as by the FAD-dependent monooxygenase macF, to produce additional macrophorins, including 4'-oxomacrophorin A, 4'-oxomacrophorin D and 4'-oxomacrophorin E. The sequence is that of Short chain dehydrogenase macD from Penicillium terrestre.